The following is a 392-amino-acid chain: 6-aminohexanoate-dimer hydrolase (392 aa).

The tract at residues 1 to 27 (MNTPTTGSHPARYPSAAAGEPTLDSWQ) is disordered. Residue S112 is part of the active site.

The enzyme catalyses [N-(6-aminohexanoyl)](n) + H2O = [N-(6-aminohexanoyl)](n-1) + 6-aminohexanoate. It carries out the reaction N-(6-aminohexanoyl)-6-aminohexanoate + H2O = 2 6-aminohexanoate. The protein operates within xenobiotic degradation; nylon-6 oligomer degradation. Its function is as follows. Involved in nylon oligomer degradation. This Paenarthrobacter ureafaciens protein is 6-aminohexanoate-dimer hydrolase.